A 400-amino-acid polypeptide reads, in one-letter code: Enoyl-[acyl-carrier-protein] reductase [NADH] (400 aa).

Residues 48 to 53 (GASTGY), 74 to 75 (FE), 111 to 112 (DA), and 139 to 140 (LA) contribute to the NAD(+) site. Residue Y225 coordinates substrate. The active-site Proton donor is Y235. Residues K244 and 273-275 (VVT) each bind NAD(+).

It belongs to the TER reductase family. In terms of assembly, monomer.

It carries out the reaction a 2,3-saturated acyl-[ACP] + NAD(+) = a (2E)-enoyl-[ACP] + NADH + H(+). It functions in the pathway lipid metabolism; fatty acid biosynthesis. In terms of biological role, involved in the final reduction of the elongation cycle of fatty acid synthesis (FAS II). Catalyzes the reduction of a carbon-carbon double bond in an enoyl moiety that is covalently linked to an acyl carrier protein (ACP). The sequence is that of Enoyl-[acyl-carrier-protein] reductase [NADH] from Burkholderia vietnamiensis (strain G4 / LMG 22486) (Burkholderia cepacia (strain R1808)).